The chain runs to 158 residues: MPHLTHFDTAGQAHMVDVGDKAVTHRVAVATGLIHMLPTTFALVRDGTAKKGDVLGIARIAAIQGAKRTSDLIPLCHPLALTKVAVDFELDEADRTVRCTVRAETHGQTGVEMEALTAVQVGLLTIYDMCKAVDRGMVIGDVRLMEKRGGKSGEWVAQ.

Substrate-binding positions include 75 to 77 and 113 to 114; these read LCH and ME. Residue Asp128 is part of the active site.

The protein belongs to the MoaC family. Homohexamer; trimer of dimers.

It catalyses the reaction (8S)-3',8-cyclo-7,8-dihydroguanosine 5'-triphosphate = cyclic pyranopterin phosphate + diphosphate. The protein operates within cofactor biosynthesis; molybdopterin biosynthesis. Catalyzes the conversion of (8S)-3',8-cyclo-7,8-dihydroguanosine 5'-triphosphate to cyclic pyranopterin monophosphate (cPMP). The chain is Cyclic pyranopterin monophosphate synthase from Ralstonia nicotianae (strain ATCC BAA-1114 / GMI1000) (Ralstonia solanacearum).